The following is a 59-amino-acid chain: Small, acid-soluble spore protein H 2 (59 aa).

This sequence belongs to the SspH family.

The protein localises to the spore core. The protein is Small, acid-soluble spore protein H 2 (sspH2) of Bacillus anthracis.